A 253-amino-acid chain; its full sequence is U2 small nuclear ribonucleoprotein A' (253 aa).

LRR repeat units follow at residues 19–40, 41–62, 63–84, and 87–108; these read KDRE…GIAK, DQDA…PFFP, RLHT…IAST, and NLTT…DPLR. Residues 121–159 form the LRRCT domain; that stretch reads NPVTRKEHYRYWVIWRIPSVRFLDYQKVKDAERAKAKEL. The segment at 228–253 is disordered; sequence ELNEGRIPGGALDAGEDSEDENQMQT. A compositionally biased stretch (acidic residues) spans 241–253; it reads AGEDSEDENQMQT.

This sequence belongs to the U2 small nuclear ribonucleoprotein A family. Associated with the spliceosome.

The protein resides in the nucleus. Involved in pre-mRNA splicing. This Aspergillus fumigatus (strain ATCC MYA-4609 / CBS 101355 / FGSC A1100 / Af293) (Neosartorya fumigata) protein is U2 small nuclear ribonucleoprotein A' (lea1).